The primary structure comprises 775 residues: MEPRPGASTRRPEGRPQREPAPDVWVFPCDRDLPDSSDSEAETEVGGRGDADHHDDDSASEADSTDTELFETGLLGPQGVDGGAVSGGSPPREEDPGSCGGAPPREDGGSDEGDVCAVCTDEIAPHLRCDTFPCMHRFCIPCMKTWMQLRNTCPLCNAKLVYLIVGVTPSGSFSTIPIVNDPQTRMEAEEAVRAGTAVDFIWTGNQRFAPRYLTLGGHTVRALSPTHPEPTTDEDDDDLDDADYVPPAPRRTPRAPPRRGAAAPPVTGGASHAAPQPAAARTAPPSAPIGPHGSSNTNTTTNSSGGGGSRQSRAAAPRGASGPSGGVGVGVGVVEAEAGRPRGRTGPLVNRPAPLANNRDPIVISDSPPASPHRPPAAPMPGSAPRPGPPASAAASGPARPRAAVAPCVRAPPPGPGPRAPAPGAEPAARPADARRVPQSHSSLAQAANQEQSLCRARATVARGSGGPGVEGGHGPSRGAAPSGAAPLPSAASVEQEAAVRPRKRRGSGQENPSPQSTRPPLAPAGAKRAATHPPSDSGPGGRGQGGPGTPLTSSAASASSSSASSSSAPTPAGAASSAAGAASSSASASSGGAVGALGGRQEETSLGPRAASGPRGPRKCARKTRHAETSGAVPAGGLTRYLPISGVSSVVALSPYVNKTITGDCLPILDMETGNIGAYVVLVDQTGNMATRLRAAVPGWSRRTLLPETAGNHVMPPEYPTAPASEWNSLWMTPVGNMLFDQGTLVGALDFRSLRSRHPWSGEQGASTRDEGKQ.

Positions 1-112 (MEPRPGASTR…PPREDGGSDE (112 aa)) are disordered. Composition is skewed to basic and acidic residues over residues 10 to 21 (RRPEGRPQREPA) and 45 to 57 (VGGRGDADHHDDD). Over residues 58–69 (SASEADSTDTEL) the composition is skewed to acidic residues. Thr-67 carries the phosphothreonine; by host; by CK1 modification. The segment at 116–157 (CAVCTDEIAPHLRCDTFPCMHRFCIPCMKTWMQLRNTCPLCN) adopts an RING-type zinc-finger fold. A disordered region spans residues 221–636 (RALSPTHPEP…HAETSGAVPA (416 aa)). The segment covering 231–243 (TTDEDDDDLDDAD) has biased composition (acidic residues). A compositionally biased stretch (low complexity) spans 258-284 (RRGAAAPPVTGGASHAAPQPAAARTAP). Over residues 293–302 (GSSNTNTTTN) the composition is skewed to polar residues. Residues 310 to 321 (RQSRAAAPRGAS) are compositionally biased toward low complexity. Residues 322 to 331 (GPSGGVGVGV) show a composition bias toward gly residues. The segment covering 369–390 (PASPHRPPAAPMPGSAPRPGPP) has biased composition (pro residues). Positions 391-409 (ASAAASGPARPRAAVAPCV) are enriched in low complexity. Pro residues predominate over residues 410 to 421 (RAPPPGPGPRAP). A compositionally biased stretch (low complexity) spans 422 to 431 (APGAEPAARP). A compositionally biased stretch (polar residues) spans 439 to 453 (QSHSSLAQAANQEQS). Residues 464 to 476 (GSGGPGVEGGHGP) are compositionally biased toward gly residues. Residues 477 to 493 (SRGAAPSGAAPLPSAAS) show a composition bias toward low complexity. The span at 509–519 (GQENPSPQSTR) shows a compositional bias: polar residues. Residues 539–549 (GPGGRGQGGPG) show a composition bias toward gly residues. Residues 550-592 (TPLTSSAASASSSSASSSSAPTPAGAASSAAGAASSSASASSG) are compositionally biased toward low complexity. Residues 617 to 626 (GPRKCARKTR) are compositionally biased toward basic residues.

Belongs to the simplexviruses ICp0 family. Interacts directly with human RCOR1/CoREST protein, leading to the disruption of the human BHC corepressor complex. Interacts with human CENPA, leading to its degradation. Interacts with human USP7; this interaction modulates ICP0 stability. Interacts with human CDC34. Interacts (when phosphorylated) with human RNF8 (via FHA domain). Interacts with human TRIM27. Interacts with human ZBP1. Interacts with host MORC3; this interaction promotes the degradation of host MORC3. Phosphorylated at Thr-67, leading to promote interaction with host RNF8. Phosphorylated by host CHEK2; leading to increased SUMO-targeted ubiquitin ligase activity of ICP0. Post-translationally, auto-ubiquitinated. Deubiquitinated by host USP7; leading to stabilize it.

The protein localises to the host cytoplasm. It localises to the host nucleus. It carries out the reaction S-ubiquitinyl-[E2 ubiquitin-conjugating enzyme]-L-cysteine + [acceptor protein]-L-lysine = [E2 ubiquitin-conjugating enzyme]-L-cysteine + N(6)-ubiquitinyl-[acceptor protein]-L-lysine.. SUMO-targeted ubiquitin ligase that plays an essential role in nuclear antiviral defense evasion triggered by dsDNA viruses. Acts during the initial stages of lytic infection and the reactivation of latent viral genome. Prevents the antiviral effect of nuclear bodies by degrading host PML, SP100 and MORC3. Prevents antiviral response to viral DNA induced by IFI16 by degrading it. Additionally, inhibits host IRF3 nuclear signaling to prevent interferon production by the infected cells. Interestingly, the E3 ubiquitin ligase activity associated with the RING finger domain does not seem to be directly required to inhibit the activation of IRF3 but instead plays a critical role in modulating the cellular localization of ICP0. Upon reactivation of latent genome, suppresses the silencing of viral DNA by dissociating either HDAC1 or HDAC2 from the HDAC-RCOR1-REST-KDM1A complex localized at the ND10 structures and causes their dispersal. Two cellular histone ubiquitin ligases RNF8 and RNF168 are also targeted by ICP0 for degradation, leading to a loss of ubiquitinated forms of H2A, a relief of transcriptional repression, and the activation of latent viral genomes. Enhances the localization of host CCND3 to ND10 bodies that serve as precursors of replication compartments to enable efficient viral replication. Like many RING-finger E3 ubiquitin ligases, ICP0 can induce its own ubiquitination, an activity that promotes its instability due to its targeting to the 26S proteasome for degradation. ICP0 restricts this process by recruiting the cellular ubiquitin-specific protease USP7 that cleaves the anchored ubiquitin chains from ICP0, thereby promoting its stabilization. The polypeptide is E3 ubiquitin-protein ligase ICP0 (ICP0) (Homo sapiens (Human)).